The following is a 300-amino-acid chain: Ribosomal protein bS6--L-glutamate ligase (300 aa).

The ATP-grasp domain occupies 104–287 (LQLLARQGID…IAGRMIQWIE (184 aa)). Residues K141, 178 to 179 (EY), D187, and 211 to 213 (RSN) each bind ATP. Residues D248, E260, and N262 each coordinate Mg(2+). 3 residues coordinate Mn(2+): D248, E260, and N262.

This sequence belongs to the RimK family. The cofactor is Mg(2+). It depends on Mn(2+) as a cofactor.

Functionally, an L-glutamate ligase that catalyzes the ATP-dependent post-translational addition of glutamate residues to the C-terminus of ribosomal protein bS6 (RpsF). Is also able to catalyze the synthesis of poly-alpha-glutamate in vitro, via ATP hydrolysis from unprotected glutamate as substrate. The number of glutamate residues added to either RpsF or to poly-alpha-glutamate changes with pH. This is Ribosomal protein bS6--L-glutamate ligase from Salmonella schwarzengrund (strain CVM19633).